A 289-amino-acid polypeptide reads, in one-letter code: dTDP-rhamnosyl transferase RfbG (289 aa).

This sequence belongs to the glycosyltransferase 2 family.

It participates in bacterial outer membrane biogenesis; lipopolysaccharide biosynthesis. In Shigella flexneri, this protein is dTDP-rhamnosyl transferase RfbG (rfbG).